We begin with the raw amino-acid sequence, 117 residues long: Small ribosomal subunit protein bS6 (117 aa).

The disordered stretch occupies residues 96-117 (KEAAAPAPKAAPVESAPAVEAE). The segment covering 99 to 117 (AAPAPKAAPVESAPAVEAE) has biased composition (low complexity).

The protein belongs to the bacterial ribosomal protein bS6 family.

Binds together with bS18 to 16S ribosomal RNA. In Geobacter sulfurreducens (strain ATCC 51573 / DSM 12127 / PCA), this protein is Small ribosomal subunit protein bS6.